The sequence spans 279 residues: Thioredoxin-like 1-1, chloroplastic (279 aa).

Residues 56–202 (ALTERKARPL…FKDALAKHGP (147 aa)) enclose the Thioredoxin domain. Catalysis depends on nucleophile residues Cys125 and Cys128. Cys125 and Cys128 are oxidised to a cystine.

This sequence belongs to the thioredoxin family.

Probable thiol-disulfide oxidoreductase that may participate in various redox reactions. The protein is Thioredoxin-like 1-1, chloroplastic of Oryza sativa subsp. japonica (Rice).